Consider the following 148-residue polypeptide: Putative adenylate kinase (148 aa).

ATP contacts are provided by Gly-9, Gly-11, Lys-12, Ser-13, and Thr-14. Residues 28 to 44 (EGNALAVKYGCLSGDEV) form an NMP region. An LID region spans residues 91-101 (DRGYSPEKIDE). An ATP-binding site is contributed by Arg-92.

It belongs to the adenylate kinase family. AK6 subfamily. In terms of assembly, interacts with uS11. Not a structural component of 40S pre-ribosomes, but transiently interacts with them by binding to uS11.

It carries out the reaction AMP + ATP = 2 ADP. The catalysed reaction is ATP + H2O = ADP + phosphate + H(+). In terms of biological role, broad-specificity nucleoside monophosphate (NMP) kinase that catalyzes the reversible transfer of the terminal phosphate group between nucleoside triphosphates and monophosphates. Also has ATPase activity. Involved in the late maturation steps of the 30S ribosomal particles, specifically 16S rRNA maturation. While NMP activity is not required for ribosome maturation, ATPase activity is. Associates transiently with small ribosomal subunit protein uS11. ATP hydrolysis breaks the interaction with uS11. May temporarily remove uS11 from the ribosome to enable a conformational change of the ribosomal RNA that is needed for the final maturation step of the small ribosomal subunit. The chain is Putative adenylate kinase from Thermoplasma acidophilum (strain ATCC 25905 / DSM 1728 / JCM 9062 / NBRC 15155 / AMRC-C165).